The sequence spans 511 residues: Inactive cytochrome P450 monooxygenase cloA (511 aa).

The chain crosses the membrane as a helical span at residues 17–37 (ILLTAGLCVPCALVIHGIYNL). N-linked (GlcNAc...) asparagine glycosylation is found at Asn81 and Asn344. Cys450 provides a ligand contact to heme.

Belongs to the cytochrome P450 family. Heme serves as cofactor.

The protein resides in the membrane. In terms of biological role, inactive cytochrome P450 monooxygenase; part of the gene cluster that mediates the biosynthesis of fungal ergot alkaloid. DmaW catalyzes the first step of ergot alkaloid biosynthesis by condensing dimethylallyl diphosphate (DMAP) and tryptophan to form 4-dimethylallyl-L-tryptophan. The second step is catalyzed by the methyltransferase easF that methylates 4-dimethylallyl-L-tryptophan in the presence of S-adenosyl-L-methionine, resulting in the formation of 4-dimethylallyl-L-abrine. The catalase easC and the FAD-dependent oxidoreductase easE then transform 4-dimethylallyl-L-abrine to chanoclavine-I which is further oxidized by easD in the presence of NAD(+), resulting in the formation of chanoclavine-I aldehyde. Agroclavine dehydrogenase easG then mediates the conversion of chanoclavine-I aldehyde to agroclavine via a non-enzymatic adduct reaction: the substrate is an iminium intermediate that is formed spontaneously from chanoclavine-I aldehyde in the presence of glutathione. Further conversion of agroclavine to paspalic acid is a two-step process involving oxidation of agroclavine to elymoclavine and of elymoclavine to paspalic acid, the second step being performed by the elymoclavine oxidase cloA. However, cloA does not encode a functional enzyme indicating that C.fusiformis terminates its ergot alkaloid pathway at elymoclavine. The polypeptide is Inactive cytochrome P450 monooxygenase cloA (Claviceps fusiformis (Ergot fungus)).